The primary structure comprises 373 residues: Flagellar P-ring protein (373 aa).

A signal peptide spans 1–28 (MPRVSTHLVKLAAAALCALLLSAVAASA).

It belongs to the FlgI family. The basal body constitutes a major portion of the flagellar organelle and consists of four rings (L,P,S, and M) mounted on a central rod.

It is found in the periplasm. The protein resides in the bacterial flagellum basal body. Its function is as follows. Assembles around the rod to form the L-ring and probably protects the motor/basal body from shearing forces during rotation. The polypeptide is Flagellar P-ring protein (Rhodopseudomonas palustris (strain ATCC BAA-98 / CGA009)).